Here is a 210-residue protein sequence, read N- to C-terminus: Dephospho-CoA kinase (210 aa).

In terms of domain architecture, DPCK spans 15–210; sequence VLGLTGGIGC…HKGYLKLALK (196 aa). Residue 23 to 28 participates in ATP binding; sequence GCGKTA.

This sequence belongs to the CoaE family.

It is found in the cytoplasm. It catalyses the reaction 3'-dephospho-CoA + ATP = ADP + CoA + H(+). Its pathway is cofactor biosynthesis; coenzyme A biosynthesis; CoA from (R)-pantothenate: step 5/5. Functionally, catalyzes the phosphorylation of the 3'-hydroxyl group of dephosphocoenzyme A to form coenzyme A. This is Dephospho-CoA kinase from Pseudoalteromonas translucida (strain TAC 125).